A 156-amino-acid chain; its full sequence is Ribosomal RNA large subunit methyltransferase H (156 aa).

S-adenosyl-L-methionine contacts are provided by residues Leu72, Gly103, and 122–127 (LSSLTL).

Belongs to the RNA methyltransferase RlmH family. As to quaternary structure, homodimer.

It is found in the cytoplasm. The catalysed reaction is pseudouridine(1915) in 23S rRNA + S-adenosyl-L-methionine = N(3)-methylpseudouridine(1915) in 23S rRNA + S-adenosyl-L-homocysteine + H(+). In terms of biological role, specifically methylates the pseudouridine at position 1915 (m3Psi1915) in 23S rRNA. The sequence is that of Ribosomal RNA large subunit methyltransferase H from Dechloromonas aromatica (strain RCB).